The sequence spans 151 residues: Putative truncated GMC-type inactive oxidoreductase L893 (151 aa).

It belongs to the GMC oxidoreductase family.

The protein localises to the virion. This Acanthamoeba polyphaga (Amoeba) protein is Putative truncated GMC-type inactive oxidoreductase L893.